A 234-amino-acid polypeptide reads, in one-letter code: Adenosine 5'-phosphosulfate reductase (234 aa).

[4Fe-4S] cluster is bound by residues cysteine 120, cysteine 121, cysteine 203, and cysteine 206. The active-site Nucleophile; cysteine thiosulfonate intermediate is cysteine 229.

The protein belongs to the PAPS reductase family. CysH subfamily. It depends on [4Fe-4S] cluster as a cofactor.

Its subcellular location is the cytoplasm. The enzyme catalyses [thioredoxin]-disulfide + sulfite + AMP + 2 H(+) = adenosine 5'-phosphosulfate + [thioredoxin]-dithiol. The protein operates within sulfur metabolism; hydrogen sulfide biosynthesis; sulfite from sulfate. Catalyzes the formation of sulfite from adenosine 5'-phosphosulfate (APS) using thioredoxin as an electron donor. This Bacillus cereus (strain B4264) protein is Adenosine 5'-phosphosulfate reductase.